Here is an 87-residue protein sequence, read N- to C-terminus: RNA-binding protein Hfq (87 aa).

The 60-residue stretch at 9–68 (DPFLNALRRERIPVSIYLVNGIKLQGQIESFDQFVILLKNTVSQMVYKHAISTVVPARAV) folds into the Sm domain.

The protein belongs to the Hfq family. As to quaternary structure, homohexamer.

In terms of biological role, RNA chaperone that binds small regulatory RNA (sRNAs) and mRNAs to facilitate mRNA translational regulation in response to envelope stress, environmental stress and changes in metabolite concentrations. Also binds with high specificity to tRNAs. The chain is RNA-binding protein Hfq from Aeromonas hydrophila subsp. hydrophila (strain ATCC 7966 / DSM 30187 / BCRC 13018 / CCUG 14551 / JCM 1027 / KCTC 2358 / NCIMB 9240 / NCTC 8049).